The sequence spans 413 residues: Serine hydroxymethyltransferase (413 aa).

(6S)-5,6,7,8-tetrahydrofolate-binding positions include Leu117 and 121-123 (GHL). Residue Lys226 is modified to N6-(pyridoxal phosphate)lysine. (6S)-5,6,7,8-tetrahydrofolate is bound by residues Glu239 and 349–351 (SPF).

Belongs to the SHMT family. In terms of assembly, homodimer. It depends on pyridoxal 5'-phosphate as a cofactor.

It is found in the cytoplasm. It carries out the reaction (6R)-5,10-methylene-5,6,7,8-tetrahydrofolate + glycine + H2O = (6S)-5,6,7,8-tetrahydrofolate + L-serine. It functions in the pathway one-carbon metabolism; tetrahydrofolate interconversion. It participates in amino-acid biosynthesis; glycine biosynthesis; glycine from L-serine: step 1/1. Functionally, catalyzes the reversible interconversion of serine and glycine with tetrahydrofolate (THF) serving as the one-carbon carrier. This reaction serves as the major source of one-carbon groups required for the biosynthesis of purines, thymidylate, methionine, and other important biomolecules. Also exhibits THF-independent aldolase activity toward beta-hydroxyamino acids, producing glycine and aldehydes, via a retro-aldol mechanism. The protein is Serine hydroxymethyltransferase of Bacillus cereus (strain AH820).